The chain runs to 620 residues: Chaperone protein DnaK (620 aa).

Residue Thr197 is modified to Phosphothreonine; by autocatalysis. Positions Ala597–Glu620 are disordered.

It belongs to the heat shock protein 70 family.

Functionally, acts as a chaperone. This is Chaperone protein DnaK from Helicobacter pylori (strain G27).